The sequence spans 512 residues: ATP synthase subunit alpha (512 aa).

Residue 169 to 176 (GDRQTGKT) participates in ATP binding.

It belongs to the ATPase alpha/beta chains family. F-type ATPases have 2 components, CF(1) - the catalytic core - and CF(0) - the membrane proton channel. CF(1) has five subunits: alpha(3), beta(3), gamma(1), delta(1), epsilon(1). CF(0) has three main subunits: a(1), b(2) and c(9-12). The alpha and beta chains form an alternating ring which encloses part of the gamma chain. CF(1) is attached to CF(0) by a central stalk formed by the gamma and epsilon chains, while a peripheral stalk is formed by the delta and b chains.

The protein localises to the cell inner membrane. The enzyme catalyses ATP + H2O + 4 H(+)(in) = ADP + phosphate + 5 H(+)(out). Functionally, produces ATP from ADP in the presence of a proton gradient across the membrane. The alpha chain is a regulatory subunit. The polypeptide is ATP synthase subunit alpha (Orientia tsutsugamushi (strain Boryong) (Rickettsia tsutsugamushi)).